Consider the following 253-residue polypeptide: 2-C-methyl-D-erythritol 4-phosphate cytidylyltransferase (253 aa).

This sequence belongs to the IspD/TarI cytidylyltransferase family. IspD subfamily.

It carries out the reaction 2-C-methyl-D-erythritol 4-phosphate + CTP + H(+) = 4-CDP-2-C-methyl-D-erythritol + diphosphate. Its pathway is isoprenoid biosynthesis; isopentenyl diphosphate biosynthesis via DXP pathway; isopentenyl diphosphate from 1-deoxy-D-xylulose 5-phosphate: step 2/6. Functionally, catalyzes the formation of 4-diphosphocytidyl-2-C-methyl-D-erythritol from CTP and 2-C-methyl-D-erythritol 4-phosphate (MEP). The polypeptide is 2-C-methyl-D-erythritol 4-phosphate cytidylyltransferase (Idiomarina loihiensis (strain ATCC BAA-735 / DSM 15497 / L2-TR)).